A 533-amino-acid chain; its full sequence is L-aspartate oxidase 1 (533 aa).

FAD is bound by residues 10–13 (SGLA), Lys32, 39–46 (ASDWAQGG), and Asp214. Arg281 serves as the catalytic Proton donor/acceptor. Residues Glu366 and 382–383 (SL) contribute to the FAD site.

This sequence belongs to the FAD-dependent oxidoreductase 2 family. NadB subfamily. FAD serves as cofactor.

It is found in the cytoplasm. The enzyme catalyses L-aspartate + O2 = iminosuccinate + H2O2. It functions in the pathway cofactor biosynthesis; NAD(+) biosynthesis; iminoaspartate from L-aspartate (oxidase route): step 1/1. In terms of biological role, catalyzes the oxidation of L-aspartate to iminoaspartate, the first step in the de novo biosynthesis of NAD(+). In Ralstonia nicotianae (strain ATCC BAA-1114 / GMI1000) (Ralstonia solanacearum), this protein is L-aspartate oxidase 1 (nadB1).